Reading from the N-terminus, the 376-residue chain is Zinc-regulated transporter 1 (376 aa).

Residues 1-50 (MSNVTTPWWKQWDPSEVTLADKTPDDVWKTCVLQGVYFGGNEYNGNLGAR) are Extracellular-facing. Residues 51–71 (ISSVFVILFVSTFFTMFPLIS) form a helical membrane-spanning segment. Over 72 to 80 (TKVKRLRIP) the chain is Cytoplasmic. A helical transmembrane segment spans residues 81-101 (LYVYLFAKYFGSGVIVATAFI). At 102 to 122 (HLMDPAYGAIGGTTCVGQTGN) the chain is on the extracellular side. Residues 123-143 (WGLYSWCPAIMLTSLTFTFLT) traverse the membrane as a helical segment. Residues 144–216 (DLFSSVWVER…TSMDVVQSFQ (73 aa)) lie on the Cytoplasmic side of the membrane. The segment covering 177–191 (VSSENDNENGTANGS) has biased composition (polar residues). Residues 177 to 196 (VSSENDNENGTANGSHDTKN) form a disordered region. A helical membrane pass occupies residues 217 to 237 (AQFYAFLILEFGVIFHSVMIG). Residues 238-242 (LNLGS) are Extracellular-facing. The chain crosses the membrane as a helical span at residues 243 to 263 (VGDEFSSLYPVLVFHQSFEGL). At 264-278 (GIGARLSAIEFPRSK) the chain is on the cytoplasmic side. The chain crosses the membrane as a helical span at residues 279 to 299 (RWWPWALCVAYGLTTPICVAI). At 300 to 310 (GLGVRTRYVSG) the chain is on the extracellular side. The chain crosses the membrane as a helical span at residues 311–331 (SYTALVISGVLDAISAGILLY). Residues 332–354 (TGLVELLARDFIFNPQRTKDLRE) are Cytoplasmic-facing. Residues 355 to 375 (LSFNVICTLFGAGIMALIGKW) form a helical membrane-spanning segment. A topological domain (extracellular) is located at residue Ala-376.

The protein belongs to the ZIP transporter (TC 2.A.5) family.

The protein resides in the membrane. High-affinity zinc transport protein. In Saccharomyces cerevisiae (strain ATCC 204508 / S288c) (Baker's yeast), this protein is Zinc-regulated transporter 1 (ZRT1).